Reading from the N-terminus, the 116-residue chain is Tyrosine-protein phosphatase 14 (116 aa).

The Tyrosine-protein phosphatase domain maps to 1-116; the sequence is WRMITQEKAQ…SLKNPGPVIV (116 aa). Aspartate 84 provides a ligand contact to substrate.

The protein belongs to the protein-tyrosine phosphatase family.

The enzyme catalyses O-phospho-L-tyrosyl-[protein] + H2O = L-tyrosyl-[protein] + phosphate. This Styela plicata (Wrinkled sea squirt) protein is Tyrosine-protein phosphatase 14 (STY-14).